The sequence spans 432 residues: Probable exopolygalacturonase C (432 aa).

An N-terminal signal peptide occupies residues 1–20 (MPISKGIFLSLLSTLPLALA). 4 N-linked (GlcNAc...) asparagine glycosylation sites follow: Asn33, Asn73, Asn90, and Asn140. PbH1 repeat units lie at residues 206–227 (GTNIRISDSVMYNGDDAIAVGS) and 229–250 (SHDIVFERNTIGYQSHGMSIGS). The active-site Proton donor is Asp220. His244 is a catalytic residue. Residue Asn260 is glycosylated (N-linked (GlcNAc...) asparagine). Residues 261-282 (ITNLRFEDVTVIDALYAARFKS) form a PbH1 3 repeat. Asn292 and Asn302 each carry an N-linked (GlcNAc...) asparagine glycan. Cys377 and Cys383 are disulfide-bonded. The N-linked (GlcNAc...) asparagine glycan is linked to Asn407.

The protein belongs to the glycosyl hydrolase 28 family.

The protein localises to the secreted. The catalysed reaction is [(1-&gt;4)-alpha-D-galacturonosyl](n) + H2O = alpha-D-galacturonate + [(1-&gt;4)-alpha-D-galacturonosyl](n-1). Its function is as follows. Specific in hydrolyzing the terminal glycosidic bond of polygalacturonic acid and oligogalacturonates. This is Probable exopolygalacturonase C (pgxC) from Aspergillus terreus (strain NIH 2624 / FGSC A1156).